The sequence spans 221 residues: MNYLTSQLLINEEIETINNNLKNQSDLWEDGKKTAGSYASKVKNNLQINRNSELSKKLAELIKNKLLANPLIKSFALPKLIHGIMFTKSQKNMGYGRHVDNPFMSSGRSDLSFTISLTPKDLYEGGELIIETINSENKFKLNAGEIIIYPSTYLHSVEKILSGERIVCVGWIESYVKSIEKREYLFDLDAGAKGLLAKHGRSDELDLIFKSYSNLLRLLGN.

Residues 80–174 (LIHGIMFTKS…RIVCVGWIES (95 aa)) form the Fe2OG dioxygenase domain. Fe cation-binding residues include H98, D100, and H155. R165 is a 2-oxoglutarate binding site.

Fe(2+) serves as cofactor. The cofactor is L-ascorbate.

The polypeptide is PKHD-type hydroxylase A9601_13531 (Prochlorococcus marinus (strain AS9601)).